The following is a 657-amino-acid chain: 9-cis-epoxycarotenoid dioxygenase NCED9, chloroplastic (657 aa).

Residues His-357, His-406, His-471, and His-642 each contribute to the Fe cation site.

This sequence belongs to the carotenoid oxygenase family. It depends on Fe(2+) as a cofactor. Expressed in developing siliques, embryo and endosperm.

It localises to the plastid. The protein resides in the chloroplast stroma. The enzyme catalyses a 9-cis-epoxycarotenoid + O2 = a 12'-apo-carotenal + 2-cis,4-trans-xanthoxin. It catalyses the reaction 9-cis-violaxanthin + O2 = (3S,5R,6S)-5,6-epoxy-3-hydroxy-5,6-dihydro-12'-apo-beta-caroten-12'-al + 2-cis,4-trans-xanthoxin. It carries out the reaction 9'-cis-neoxanthin + O2 = (3S,5R,6R)-3,5-dihydroxy-6,7-didehydro-5,6-dihydro-12'-apo-beta-caroten-12'-al + 2-cis,4-trans-xanthoxin. Functionally, has a 11,12(11',12') 9-cis epoxycarotenoid cleavage activity. Catalyzes the first step of abscisic-acid biosynthesis from carotenoids. Contributes probably to abscisic acid synthesis for the induction of seed dormancy. The polypeptide is 9-cis-epoxycarotenoid dioxygenase NCED9, chloroplastic (NCED9) (Arabidopsis thaliana (Mouse-ear cress)).